Here is a 336-residue protein sequence, read N- to C-terminus: Protein YIPF3 (336 aa).

Residues 1-73 are disordered; it reads MSAPGGGRSG…AGAGGEEDGE (73 aa). The Cytoplasmic portion of the chain corresponds to 1–143; the sequence is MSAPGGGRSG…PVKMINFPQK (143 aa). The segment covering 55–73 has biased composition (acidic residues); it reads EEEEEAEGEAGAGGEEDGE. A helical membrane pass occupies residues 144–164; that stretch reads IAGELYGPLMLVFTLVAILLH. Over 165–182 the chain is Lumenal; it reads GMKTSDTIIREGTLMGTA. The helical transmembrane segment at 183–203 threads the bilayer; the sequence is IGTCFGYWLGVSSFIYFLAYL. Residues 204-209 are Cytoplasmic-facing; that stretch reads CNAQIT. The helical transmembrane segment at 210 to 230 threads the bilayer; it reads MVQMLSLLGYGLFGHCITLLV. Residues 231–239 are Lumenal-facing; the sequence is TYNIHFHSL. The chain crosses the membrane as a helical span at residues 240-260; sequence FYIFWLVVGGLSTLRMVAVLV. Residues 261 to 269 lie on the Cytoplasmic side of the membrane; the sequence is SRTVGHTQR. A helical transmembrane segment spans residues 270 to 290; the sequence is LILCGTLAALHMLFLLYLHFA. Over 291–336 the chain is Lumenal; the sequence is YHKVVEGILDTLEGPNMPPFQRVARDIPVVSNAVLNTTAKANAMTL. An N-linked (GlcNAc...) asparagine glycan is attached at Asn326.

The protein belongs to the YIP1 family.

The protein localises to the cell membrane. Its subcellular location is the golgi apparatus. It is found in the cis-Golgi network membrane. It localises to the cytoplasm. Involved in the maintenance of the Golgi structure. May play a role in hematopoiesis. The sequence is that of Protein YIPF3 (YIPF3) from Gallus gallus (Chicken).